Consider the following 248-residue polypeptide: 2,3-bisphosphoglycerate-dependent phosphoglycerate mutase (248 aa).

Substrate is bound by residues 9–16, 22–23, R61, 88–91, K99, 115–116, and 183–184; these read RHGHSEWN, TG, ERHY, RR, and GN. H10 serves as the catalytic Tele-phosphohistidine intermediate. The Proton donor/acceptor role is filled by E88.

Belongs to the phosphoglycerate mutase family. BPG-dependent PGAM subfamily.

The enzyme catalyses (2R)-2-phosphoglycerate = (2R)-3-phosphoglycerate. Its pathway is carbohydrate degradation; glycolysis; pyruvate from D-glyceraldehyde 3-phosphate: step 3/5. Catalyzes the interconversion of 2-phosphoglycerate and 3-phosphoglycerate. The chain is 2,3-bisphosphoglycerate-dependent phosphoglycerate mutase from Arthrobacter sp. (strain FB24).